A 115-amino-acid polypeptide reads, in one-letter code: DNA-binding protein TV0008 (115 aa).

The segment at Leu-18–Ile-37 is disordered.

It belongs to the PDCD5 family.

In Thermoplasma volcanium (strain ATCC 51530 / DSM 4299 / JCM 9571 / NBRC 15438 / GSS1), this protein is DNA-binding protein TV0008.